The sequence spans 552 residues: HTH-type transcriptional regulator SgrR (552 aa).

In terms of domain architecture, HTH marR-type spans 1–116 (MPSGRLQQQF…LISHLGRSFR (116 aa)). The segment at residues 26–49 (LNELADLLNCSRRHMRTLLNTMQA) is a DNA-binding region (H-T-H motif). The solute-binding stretch occupies residues 163-493 (ELEADIAHHW…RDWQGDAAQW (331 aa)).

In terms of biological role, activates the small RNA gene sgrS under glucose-phosphate stress conditions as well as yfdZ. Represses its own transcription under both stress and non-stress conditions. Might act as a sensor of the intracellular accumulation of phosphoglucose by binding these molecules in its C-terminal solute-binding domain. The chain is HTH-type transcriptional regulator SgrR from Salmonella typhimurium (strain LT2 / SGSC1412 / ATCC 700720).